Here is an 874-residue protein sequence, read N- to C-terminus: Cyanophycin synthetase (874 aa).

The ATP-grasp domain occupies 224 to 480; that stretch reads KTTLAEAGIP…VAAPVIDMLF (257 aa). 495-501 contributes to the ATP binding site; sequence GTNGKTT.

In the C-terminal section; belongs to the MurCDEF family. As to quaternary structure, homodimer.

The enzyme catalyses [L-4-(L-arginin-2-N-yl)aspartate](n) + L-aspartate + ATP = [L-4-(L-arginin-2-N-yl)aspartate](n)-L-aspartate + ADP + phosphate + H(+). The catalysed reaction is [L-4-(L-arginin-2-N-yl)aspartate](n)-L-aspartate + L-arginine + ATP = [L-4-(L-arginin-2-N-yl)aspartate](n+1) + ADP + phosphate + H(+). In terms of biological role, catalyzes the ATP-dependent polymerization of arginine and aspartate to multi-L-arginyl-poly-L-aspartic acid (cyanophycin; a water-insoluble reserve polymer). In Geminocystis herdmanii (strain PCC 6308) (Synechocystis sp. (strain PCC 6308)), this protein is Cyanophycin synthetase (cphA).